A 350-amino-acid polypeptide reads, in one-letter code: Nicotinate-nucleotide--dimethylbenzimidazole phosphoribosyltransferase (350 aa).

Glu-317 functions as the Proton acceptor in the catalytic mechanism.

The protein belongs to the CobT family.

It catalyses the reaction 5,6-dimethylbenzimidazole + nicotinate beta-D-ribonucleotide = alpha-ribazole 5'-phosphate + nicotinate + H(+). It participates in nucleoside biosynthesis; alpha-ribazole biosynthesis; alpha-ribazole from 5,6-dimethylbenzimidazole: step 1/2. Functionally, catalyzes the synthesis of alpha-ribazole-5'-phosphate from nicotinate mononucleotide (NAMN) and 5,6-dimethylbenzimidazole (DMB). The protein is Nicotinate-nucleotide--dimethylbenzimidazole phosphoribosyltransferase of Shewanella oneidensis (strain ATCC 700550 / JCM 31522 / CIP 106686 / LMG 19005 / NCIMB 14063 / MR-1).